Here is a 194-residue protein sequence, read N- to C-terminus: ATP-dependent Clp protease proteolytic subunit (194 aa).

The Nucleophile role is filled by serine 98. Histidine 123 is a catalytic residue.

The protein belongs to the peptidase S14 family. Fourteen ClpP subunits assemble into 2 heptameric rings which stack back to back to give a disk-like structure with a central cavity, resembling the structure of eukaryotic proteasomes.

It is found in the cytoplasm. The catalysed reaction is Hydrolysis of proteins to small peptides in the presence of ATP and magnesium. alpha-casein is the usual test substrate. In the absence of ATP, only oligopeptides shorter than five residues are hydrolyzed (such as succinyl-Leu-Tyr-|-NHMec, and Leu-Tyr-Leu-|-Tyr-Trp, in which cleavage of the -Tyr-|-Leu- and -Tyr-|-Trp bonds also occurs).. Cleaves peptides in various proteins in a process that requires ATP hydrolysis. Has a chymotrypsin-like activity. Plays a major role in the degradation of misfolded proteins. The sequence is that of ATP-dependent Clp protease proteolytic subunit from Syntrophotalea carbinolica (strain DSM 2380 / NBRC 103641 / GraBd1) (Pelobacter carbinolicus).